A 345-amino-acid chain; its full sequence is Acetylserotonin O-methyltransferase (345 aa).

Residues Y147, W164, D210, 235-237 (GDF), and R252 contribute to the S-adenosyl-L-methionine site. Residue H255 is the Proton donor/acceptor of the active site. Substrate-binding residues include D256, N302, and Q306.

This sequence belongs to the class I-like SAM-binding methyltransferase superfamily. Cation-independent O-methyltransferase family. In terms of assembly, homodimer. In terms of tissue distribution, highly expressed in pineal gland. In the retina, 10- to 100-fold lower expression compared to pineal gland, if any.

The enzyme catalyses N-acetylserotonin + S-adenosyl-L-methionine = melatonin + S-adenosyl-L-homocysteine + H(+). It functions in the pathway aromatic compound metabolism; melatonin biosynthesis; melatonin from serotonin: step 1/2. Functionally, catalyzes the transfer of a methyl group onto N-acetylserotonin, producing melatonin (N-acetyl-5-methoxytryptamine). This is Acetylserotonin O-methyltransferase (ASMT) from Macaca mulatta (Rhesus macaque).